Consider the following 238-residue polypeptide: Probable transcriptional regulatory protein MGAS10750_Spy0264 (238 aa).

The protein belongs to the TACO1 family. YeeN subfamily.

The protein localises to the cytoplasm. The protein is Probable transcriptional regulatory protein MGAS10750_Spy0264 of Streptococcus pyogenes serotype M4 (strain MGAS10750).